The following is a 330-amino-acid chain: Ribose operon repressor (330 aa).

The HTH lacI-type domain occupies 2–56 (ATMKDVARLAGVSTSTVSHVINKDRFVSEAITAKVEAAIKELNYAPSALARSLKL). A DNA-binding region (H-T-H motif) is located at residues 4 to 23 (MKDVARLAGVSTSTVSHVIN).

Its function is as follows. Transcriptional repressor for the ribose rbsDACBK operon. RbsR binds to a region of perfect dyad symmetry spanning the rbs operon transcriptional start site. The affinity for the rbs operator is reduced by addition of ribose, consistent with ribose being the inducer of the operon. The sequence is that of Ribose operon repressor (rbsR) from Escherichia coli O6:H1 (strain CFT073 / ATCC 700928 / UPEC).